The chain runs to 64 residues: DNA gyrase inhibitor YacG (64 aa).

Zn(2+)-binding residues include cysteine 9, cysteine 12, cysteine 28, and cysteine 32. Residues 45-64 are disordered; sequence KRIPSAGDLSDSDDWSEQQP. The span at 54–64 shows a compositional bias: acidic residues; the sequence is SDSDDWSEQQP.

Belongs to the DNA gyrase inhibitor YacG family. In terms of assembly, interacts with GyrB. Zn(2+) is required as a cofactor.

Inhibits all the catalytic activities of DNA gyrase by preventing its interaction with DNA. Acts by binding directly to the C-terminal domain of GyrB, which probably disrupts DNA binding by the gyrase. This is DNA gyrase inhibitor YacG from Klebsiella pneumoniae (strain 342).